A 733-amino-acid polypeptide reads, in one-letter code: Exosome complex exonuclease RRP6 (733 aa).

Residue S138 is modified to Phosphoserine. Positions 214–380 (IWVDTSTELE…NIYDQLRNKL (167 aa)) constitute a 3'-5' exonuclease domain. The Mn(2+) site is built by D238 and E240. Zn(2+) contacts are provided by D238 and E240. The AMP site is built by E240 and H241. UMP is bound by residues E240 and H241. D296 is a binding site for Mn(2+). AMP contacts are provided by W299, K342, and Q345. 3 residues coordinate UMP: W299, K342, and Q345. D365 is a binding site for Mn(2+). D365 contacts Zn(2+). An HRDC domain is found at 435-515 (PPEREVLVRE…RDALRNIKNT (81 aa)). Position 520 is a phosphothreonine (T520). S640 and S645 each carry phosphoserine. The tract at residues 662–733 (IQKKQPAKEK…AKGKNLSFKR (72 aa)) is disordered. The span at 667–680 (PAKEKGVTEKDAVD) shows a compositional bias: basic and acidic residues. Residues 687–697 (ILSNKPGQNNR) are compositionally biased toward polar residues. Short sequence motifs (nuclear localization signal) lie at residues 700–704 (KKRRF) and 718–721 (KKRR). A compositionally biased stretch (basic residues) spans 716-733 (AAKKRRPAAKGKNLSFKR).

It belongs to the exosome component 10/RRP6 family. Component of the RNA exosome complex. Specifically part of the catalytically inactive RNA exosome core complex (Exo-9) which may associate with the catalytic subunits RRP6 and DIS3 in cytoplasmic- and nuclear-specific RNA exosome complex forms. Exo-9 is formed by a hexameric base ring of RNase PH domain-containing subunits and a cap ring consisting of CSL4, RRP4 and RRP40. RRP6 specifically is part of the nuclear form of the RNA exosome complex; the association appears to be mediated by Exo-9 and not by DIS3. Interacts with LRP1. Interacts with NPL3, NOP53 and PAP1.

The protein resides in the nucleus. Its subcellular location is the nucleolus. Functionally, nuclear-specific catalytic component of the RNA exosome complex which has 3'-&gt;5' exoribonuclease activity and participates in a multitude of cellular RNA processing and degradation events. In the nucleus, the RNA exosome complex is involved in proper maturation of stable RNA species such as rRNA, snRNA and snoRNA, in the elimination of RNA processing by-products and non-coding 'pervasive' transcripts, such as antisense RNA species and cryptic unstable transcripts (CUTs), and of mRNAs with processing defects, thereby limiting or excluding their export to the cytoplasm. The catalytic inactive RNA exosome core complex of 9 subunits (Exo-9) is proposed to play a pivotal role in the binding and presentation of RNA for ribonucleolysis, and to serve as a scaffold for the association with catalytic subunits and accessory proteins or complexes. RRP6 has 3'-5' exonuclease activity which is not modulated upon association with Exo-9 suggesting that the complex inner RNA-binding path is not used to access its active site. This is Exosome complex exonuclease RRP6 (RRP6) from Saccharomyces cerevisiae (strain ATCC 204508 / S288c) (Baker's yeast).